The chain runs to 28 residues: Putative fruR/shl operon leader peptide (28 aa).

This chain is Putative fruR/shl operon leader peptide (fruL), found in Escherichia coli O6:H1 (strain CFT073 / ATCC 700928 / UPEC).